The primary structure comprises 561 residues: Dihydroxy-acid dehydratase (561 aa).

Aspartate 80 provides a ligand contact to Mg(2+). Cysteine 121 lines the [2Fe-2S] cluster pocket. Aspartate 122 and lysine 123 together coordinate Mg(2+). An N6-carboxylysine modification is found at lysine 123. Cysteine 194 contributes to the [2Fe-2S] cluster binding site. Glutamate 448 is a binding site for Mg(2+). Serine 474 (proton acceptor) is an active-site residue.

It belongs to the IlvD/Edd family. As to quaternary structure, homodimer. The cofactor is [2Fe-2S] cluster. Requires Mg(2+) as cofactor.

The enzyme catalyses (2R)-2,3-dihydroxy-3-methylbutanoate = 3-methyl-2-oxobutanoate + H2O. The catalysed reaction is (2R,3R)-2,3-dihydroxy-3-methylpentanoate = (S)-3-methyl-2-oxopentanoate + H2O. The protein operates within amino-acid biosynthesis; L-isoleucine biosynthesis; L-isoleucine from 2-oxobutanoate: step 3/4. It functions in the pathway amino-acid biosynthesis; L-valine biosynthesis; L-valine from pyruvate: step 3/4. Functions in the biosynthesis of branched-chain amino acids. Catalyzes the dehydration of (2R,3R)-2,3-dihydroxy-3-methylpentanoate (2,3-dihydroxy-3-methylvalerate) into 2-oxo-3-methylpentanoate (2-oxo-3-methylvalerate) and of (2R)-2,3-dihydroxy-3-methylbutanoate (2,3-dihydroxyisovalerate) into 2-oxo-3-methylbutanoate (2-oxoisovalerate), the penultimate precursor to L-isoleucine and L-valine, respectively. This is Dihydroxy-acid dehydratase from Anaeromyxobacter sp. (strain Fw109-5).